We begin with the raw amino-acid sequence, 107 residues long: Nucleoid-associated protein Msil_0275 (107 aa).

The protein belongs to the YbaB/EbfC family. Homodimer.

The protein localises to the cytoplasm. It is found in the nucleoid. Its function is as follows. Binds to DNA and alters its conformation. May be involved in regulation of gene expression, nucleoid organization and DNA protection. In Methylocella silvestris (strain DSM 15510 / CIP 108128 / LMG 27833 / NCIMB 13906 / BL2), this protein is Nucleoid-associated protein Msil_0275.